Here is a 703-residue protein sequence, read N- to C-terminus: Phenylalanine aminomutase (L-beta-phenylalanine forming) (703 aa).

The active-site Proton donor/acceptor is the tyrosine 79. The 5-imidazolinone (Ala-Gly) cross-link spans alanine 177–glycine 179. Serine 178 is subject to 2,3-didehydroalanine (Ser).

The protein belongs to the PAL/histidase family. Contains an active site 4-methylidene-imidazol-5-one (MIO), which is formed autocatalytically by cyclization and dehydration of residues Ala-Ser-Gly.

It carries out the reaction L-phenylalanine = L-beta-phenylalanine. Its pathway is mycotoxin biosynthesis. Phenylalanine aminomutase; part of the gene cluster that mediates the biosynthesis of the mycotoxin cyclochlorotine, a hepatotoxic and carcinogenic cyclic chlorinated pentapeptide. Within the pathway, cctP1 provides the uncommon building block beta-Phe from Phe. The NRPS cctN initially catalyzes the condensation of L-serine (Ser), Pro, L-2-aminobutyrate (2Abu), Ser, and beta-Phe in this order to produce isocyclotine. After the dichlorination of Pro2 catalyzed by cctP2 to produce isocyclochlorotine, the cctO-mediated transacylation of isocyclochlorotine can furnish cyclochlorotine. The subsequent hydroxylation of cyclochlorotine by cctR yields hydroxycyclochlorotine as the final product. CctP1 probably acts as a phenylalanine aminomutase and provides the uncommon building block beta-Phe. Furthermore, 2Abu can be synthesized from threonine by one of the threonine dehydratases and transaminases localized outside of the cluster. The functions of the remaining proteins encoded by the cluster, cctM and cctT, have not been identified yet. This chain is Phenylalanine aminomutase (L-beta-phenylalanine forming), found in Talaromyces islandicus (Penicillium islandicum).